We begin with the raw amino-acid sequence, 1370 residues long: Insulin-like growth factor 1 receptor (1370 aa).

Residues 1–30 form the signal peptide; that stretch reads MKSGSGGGSPTSLWGLVFLSAALSLWPTSG. Cys-33 and Cys-52 are oxidised to a cystine. Residues Asn-51, Asn-102, and Asn-135 are each glycosylated (N-linked (GlcNAc...) asparagine). Intrachain disulfides connect Cys-150–Cys-178, Cys-182–Cys-205, Cys-192–Cys-211, Cys-215–Cys-224, Cys-219–Cys-230, Cys-231–Cys-239, Cys-235–Cys-248, Cys-251–Cys-260, Cys-264–Cys-276, Cys-282–Cys-303, Cys-307–Cys-321, Cys-324–Cys-328, and Cys-332–Cys-354. Asn-245 is a glycosylation site (N-linked (GlcNAc...) asparagine). The N-linked (GlcNAc...) asparagine glycan is linked to Asn-314. Asn-418 and Asn-439 each carry an N-linked (GlcNAc...) asparagine glycan. A disulfide bridge connects residues Cys-456 and Cys-489. Fibronectin type-III domains are found at residues 490–610 and 611–709; these read ESDV…TNAS and VPSI…TEAE. Residues Asn-535, Asn-608, Asn-623, Asn-641, Asn-748, Asn-757, Asn-765, Asn-901, and Asn-914 are each glycosylated (N-linked (GlcNAc...) asparagine). Residues 742–936 lie on the Extracellular side of the membrane; it reads DVLQVANTTM…AKTTYENFMH (195 aa). The 94-residue stretch at 835-928 folds into the Fibronectin type-III 3 domain; sequence IPGPVTWEPR…DPVFFYVPAK (94 aa). Residues 937-960 traverse the membrane as a helical segment; that stretch reads LIIALPVAILLIVGGLVIMLYVFH. The Cytoplasmic portion of the chain corresponds to 961 to 1370; it reads RKRNNSRLGN…ALPLPQSSTC (410 aa). Positions 978 to 981 match the IRS1- and SHC1-binding motif; sequence NPEY. Residue Tyr-981 is modified to Phosphotyrosine. Positions 1000 to 1275 constitute a Protein kinase domain; sequence ITMNRELGQG…SIKDEMEPSF (276 aa). ATP is bound by residues 1006–1014 and Lys-1034; that span reads LGQGSFGMV. The active-site Proton acceptor is Asp-1136. Phosphotyrosine; by autocatalysis is present on residues Tyr-1162, Tyr-1166, and Tyr-1167. Glycyl lysine isopeptide (Lys-Gly) (interchain with G-Cter in ubiquitin) cross-links involve residues Lys-1169 and Lys-1172. Ser-1279 carries the post-translational modification Phosphoserine; by GSK3-beta. At Ser-1283 the chain carries Phosphoserine. The interval 1304 to 1370 is disordered; the sequence is NMESVPLDPS…ALPLPQSSTC (67 aa). Residues 1305-1321 are compositionally biased toward low complexity; the sequence is MESVPLDPSASSASLPL. The span at 1322-1331 shows a compositional bias: basic and acidic residues; sequence PERHSGHKAE.

Belongs to the protein kinase superfamily. Tyr protein kinase family. Insulin receptor subfamily. As to quaternary structure, tetramer of 2 alpha and 2 beta chains linked by disulfide bonds. The alpha chains contribute to the formation of the ligand-binding domain, while the beta chain carries the kinase domain. Interacts with PIK3R1 and with the PTB/PID domains of IRS1 and SHC1 in vitro when autophosphorylated on tyrosine residues. Forms a hybrid receptor with INSR, the hybrid is a tetramer consisting of 1 alpha chain and 1 beta chain of INSR and 1 alpha chain and 1 beta chain of IGF1R. Interacts with ARRB1 and ARRB2. Interacts with GRB10. Interacts with RACK1. Interacts with SOCS1, SOCS2 and SOCS3. Interacts with 14-3-3 proteins. Interacts with NMD2. Interacts with MAP3K5. Interacts with STAT3. Found in a ternary complex with IGF1 and ITGAV:ITGB3 or ITGA6:ITGB4. Interacts (nascent precursor form) with ZFAND2B. Post-translationally, autophosphorylated on tyrosine residues in response to ligand binding. Autophosphorylation occurs in trans, i.e. one subunit of the dimeric receptor phosphorylates tyrosine residues on the other subunit. Autophosphorylation occurs in a sequential manner; Tyr-1166 is predominantly phosphorylated first, followed by phosphorylation of Tyr-1162 and Tyr-1167. While every single phosphorylation increases kinase activity, all three tyrosine residues in the kinase activation loop (Tyr-1162, Tyr-1166 and Tyr-1167) have to be phosphorylated for optimal activity. Can be autophosphorylated at additional tyrosine residues (in vitro). Autophosphorylated is followed by phosphorylation of juxtamembrane tyrosines and C-terminal serines. May also be phosphorylated at Tyr-1162 and Tyr-1167 by mTORC2. Phosphorylation of Tyr-981 is required for IRS1- and SHC1-binding. Phosphorylation of Ser-1279 by GSK-3beta restrains kinase activity and promotes cell surface expression, it requires a priming phosphorylation at Ser-1283. Dephosphorylated by PTPN1. Polyubiquitinated at Lys-1169 and Lys-1172 through both 'Lys-48' and 'Lys-29' linkages, promoting receptor endocytosis and subsequent degradation by the proteasome. Ubiquitination is facilitated by pre-existing phosphorylation. In terms of processing, sumoylated with SUMO1. Post-translationally, controlled by regulated intramembrane proteolysis (RIP). Undergoes metalloprotease-dependent constitutive ectodomain shedding to produce a membrane-anchored 52 kDa C-Terminal fragment which is further processed by presenilin gamma-secretase to yield an intracellular 50 kDa fragment.

The protein localises to the cell membrane. The enzyme catalyses L-tyrosyl-[protein] + ATP = O-phospho-L-tyrosyl-[protein] + ADP + H(+). Its activity is regulated as follows. Activated by autophosphorylation at Tyr-1162, Tyr-1166 and Tyr-1167 on the kinase activation loop; phosphorylation at all three tyrosine residues is required for optimal kinase activity. Inhibited by MSC1609119A-1, BMS-754807, PQIP, benzimidazole pyridinone, isoquinolinedione, bis-azaindole, 3-cyanoquinoline, 2,4-bis-arylamino-1,3-pyrimidine, pyrrolopyrimidine, pyrrole-5-carboxaldehyde, picropodophyllin (PPP), tyrphostin derivatives. While most inhibitors bind to the ATP binding pocket, MSC1609119A-1 functions as allosteric inhibitor and binds close to the DFG motif and the activation loop. Dephosphorylated by PTPN1. Receptor tyrosine kinase which mediates actions of insulin-like growth factor 1 (IGF1). Binds IGF1 with high affinity and IGF2 and insulin (INS) with a lower affinity. The activated IGF1R is involved in cell growth and survival control. IGF1R is crucial for tumor transformation and survival of malignant cell. Ligand binding activates the receptor kinase, leading to receptor autophosphorylation, and tyrosines phosphorylation of multiple substrates, that function as signaling adapter proteins including, the insulin-receptor substrates (IRS1/2), Shc and 14-3-3 proteins. Phosphorylation of IRSs proteins lead to the activation of two main signaling pathways: the PI3K-AKT/PKB pathway and the Ras-MAPK pathway. The result of activating the MAPK pathway is increased cellular proliferation, whereas activating the PI3K pathway inhibits apoptosis and stimulates protein synthesis. Phosphorylated IRS1 can activate the 85 kDa regulatory subunit of PI3K (PIK3R1), leading to activation of several downstream substrates, including protein AKT/PKB. AKT phosphorylation, in turn, enhances protein synthesis through mTOR activation and triggers the antiapoptotic effects of IGFIR through phosphorylation and inactivation of BAD. In parallel to PI3K-driven signaling, recruitment of Grb2/SOS by phosphorylated IRS1 or Shc leads to recruitment of Ras and activation of the ras-MAPK pathway. In addition to these two main signaling pathways IGF1R signals also through the Janus kinase/signal transducer and activator of transcription pathway (JAK/STAT). Phosphorylation of JAK proteins can lead to phosphorylation/activation of signal transducers and activators of transcription (STAT) proteins. In particular activation of STAT3, may be essential for the transforming activity of IGF1R. The JAK/STAT pathway activates gene transcription and may be responsible for the transforming activity. JNK kinases can also be activated by the IGF1R. IGF1 exerts inhibiting activities on JNK activation via phosphorylation and inhibition of MAP3K5/ASK1, which is able to directly associate with the IGF1R. When present in a hybrid receptor with INSR, binds IGF1. The sequence is that of Insulin-like growth factor 1 receptor (Igf1r) from Rattus norvegicus (Rat).